Consider the following 606-residue polypeptide: Leucine-rich repeat and immunoglobulin-like domain-containing nogo receptor-interacting protein 2 (606 aa).

The N-terminal stretch at Met1 to Gly27 is a signal peptide. The LRRNT domain maps to Cys28–Ile57. The Extracellular portion of the chain corresponds to Cys28–Thr545. Asn38 carries N-linked (GlcNAc...) asparagine glycosylation. 12 LRR repeats span residues Glu58 to Ser79, Leu82 to Asn103, Asn106 to Gly127, Asn130 to Asp151, Asn154 to Gly175, Ser178 to His199, Ser202 to Arg223, His226 to Tyr247, Asn250 to His271, Tyr274 to Asp295, Arg298 to Gly319, and Phe322 to Ser343. The N-linked (GlcNAc...) asparagine glycan is linked to Asn130. The N-linked (GlcNAc...) asparagine glycan is linked to Asn188. Residue Asn279 is glycosylated (N-linked (GlcNAc...) asparagine). N-linked (GlcNAc...) asparagine glycosylation occurs at Asn327. The 55-residue stretch at Asn355–Lys409 folds into the LRRCT domain. An Ig-like C2-type domain is found at Pro410–Thr499. Cys432 and Cys483 are joined by a disulfide. Residues Ala546–Trp566 traverse the membrane as a helical segment. Residues Ser567 to Ile606 are Cytoplasmic-facing.

The protein resides in the membrane. In Homo sapiens (Human), this protein is Leucine-rich repeat and immunoglobulin-like domain-containing nogo receptor-interacting protein 2 (LINGO2).